The following is a 426-amino-acid chain: Mediator of RNA polymerase II transcription subunit 1 (426 aa).

Residues 324–356 (VGDAPAPAAQPPLHRRRSSNKGCRRASAAESAT) form a disordered region. Basic residues predominate over residues 336–347 (LHRRRSSNKGCR).

Belongs to the Mediator complex subunit 1 family. Component of the Mediator complex.

It is found in the nucleus. Functionally, component of the Mediator complex, a coactivator involved in the regulated transcription of nearly all RNA polymerase II-dependent genes. Mediator functions as a bridge to convey information from gene-specific regulatory proteins to the basal RNA polymerase II transcription machinery. Mediator is recruited to promoters by direct interactions with regulatory proteins and serves as a scaffold for the assembly of a functional preinitiation complex with RNA polymerase II and the general transcription factors. This chain is Mediator of RNA polymerase II transcription subunit 1 (MED1), found in Eremothecium gossypii (strain ATCC 10895 / CBS 109.51 / FGSC 9923 / NRRL Y-1056) (Yeast).